The primary structure comprises 142 residues: Large ribosomal subunit protein uL11 (142 aa).

The protein belongs to the universal ribosomal protein uL11 family. In terms of assembly, part of the ribosomal stalk of the 50S ribosomal subunit. Interacts with L10 and the large rRNA to form the base of the stalk. L10 forms an elongated spine to which L12 dimers bind in a sequential fashion forming a multimeric L10(L12)X complex. Post-translationally, one or more lysine residues are methylated.

Functionally, forms part of the ribosomal stalk which helps the ribosome interact with GTP-bound translation factors. The polypeptide is Large ribosomal subunit protein uL11 (Desulfitobacterium hafniense (strain DSM 10664 / DCB-2)).